Consider the following 352-residue polypeptide: Ion-translocating oxidoreductase complex subunit D (352 aa).

5 helical membrane-spanning segments follow: residues 20-40, 42-62, 78-109, 123-143, and 148-168; these read IMLL…WFFG, GTLV…ALVL, ALLT…VIIA, PAMI…TSWL, and IAVN…GHTA. The residue at position 187 (Thr-187) is an FMN phosphoryl threonine. 4 helical membrane passes run 214–234, 242–262, 267–287, and 301–318; these read ILAG…GVWL, WHIP…GWLF, LAAP…FFIL, and LMFG…RSFG.

The protein belongs to the NqrB/RnfD family. As to quaternary structure, the complex is composed of six subunits: RsxA, RsxB, RsxC, RsxD, RsxE and RsxG. FMN serves as cofactor.

The protein resides in the cell inner membrane. In terms of biological role, part of a membrane-bound complex that couples electron transfer with translocation of ions across the membrane. Required to maintain the reduced state of SoxR. The chain is Ion-translocating oxidoreductase complex subunit D from Shigella flexneri serotype 5b (strain 8401).